A 335-amino-acid chain; its full sequence is Glyceraldehyde-3-phosphate dehydrogenase 2 (335 aa).

NAD(+)-binding positions include 13–14 (RI), D34, and M79. D-glyceraldehyde 3-phosphate contacts are provided by residues 151–153 (SCT), T182, 211–212 (TG), and R234. Residue C152 is the Nucleophile of the active site. N316 provides a ligand contact to NAD(+).

The protein belongs to the glyceraldehyde-3-phosphate dehydrogenase family. In terms of assembly, homotetramer.

It is found in the cytoplasm. It carries out the reaction D-glyceraldehyde 3-phosphate + phosphate + NAD(+) = (2R)-3-phospho-glyceroyl phosphate + NADH + H(+). Its pathway is carbohydrate degradation; glycolysis; pyruvate from D-glyceraldehyde 3-phosphate: step 1/5. In terms of biological role, glyceraldehyde-3-phosphate dehydrogenase is a key enzyme in glycolysis that catalyzes the first step of the pathway by converting D-glyceraldehyde 3-phosphate (G3P) into 3-phospho-D-glyceroyl phosphate. The sequence is that of Glyceraldehyde-3-phosphate dehydrogenase 2 (gapdh-2) from Danio rerio (Zebrafish).